The primary structure comprises 255 residues: tRNA (guanine-N(1)-)-methyltransferase (255 aa).

Residues glycine 117 and 137-142 contribute to the S-adenosyl-L-methionine site; that span reads LGDFVL.

This sequence belongs to the RNA methyltransferase TrmD family. In terms of assembly, homodimer.

The protein resides in the cytoplasm. It catalyses the reaction guanosine(37) in tRNA + S-adenosyl-L-methionine = N(1)-methylguanosine(37) in tRNA + S-adenosyl-L-homocysteine + H(+). In terms of biological role, specifically methylates guanosine-37 in various tRNAs. The protein is tRNA (guanine-N(1)-)-methyltransferase of Paraburkholderia xenovorans (strain LB400).